Here is a 120-residue protein sequence, read N- to C-terminus: UPF0102 protein Daro_0503 (120 aa).

The tract at residues 1-20 is disordered; sequence MQVKANDTTTARGREAEDRA.

It belongs to the UPF0102 family.

The sequence is that of UPF0102 protein Daro_0503 from Dechloromonas aromatica (strain RCB).